A 157-amino-acid chain; its full sequence is Small ribosomal subunit protein uS7 (157 aa).

It belongs to the universal ribosomal protein uS7 family. As to quaternary structure, part of the 30S ribosomal subunit. Contacts proteins S9 and S11.

Functionally, one of the primary rRNA binding proteins, it binds directly to 16S rRNA where it nucleates assembly of the head domain of the 30S subunit. Is located at the subunit interface close to the decoding center, probably blocks exit of the E-site tRNA. This chain is Small ribosomal subunit protein uS7, found in Caulobacter vibrioides (strain ATCC 19089 / CIP 103742 / CB 15) (Caulobacter crescentus).